The following is a 141-amino-acid chain: Hemoglobin subunit alpha-3 (141 aa).

Positions 1-141 (VLSPADKTNV…VSTVLTSKYR (141 aa)) constitute a Globin domain. His58 provides a ligand contact to O2. His87 lines the heme b pocket.

Belongs to the globin family. As to quaternary structure, heterotetramer of two alpha chains and two beta chains. Red blood cells.

Involved in oxygen transport from the lung to the various peripheral tissues. The chain is Hemoglobin subunit alpha-3 from Gorilla gorilla gorilla (Western lowland gorilla).